A 126-amino-acid polypeptide reads, in one-letter code: Phosphoribosyl-AMP cyclohydrolase (126 aa).

Asp76 contacts Mg(2+). Cys77 contacts Zn(2+). Mg(2+)-binding residues include Asp78 and Asp80. Zn(2+)-binding residues include Cys94 and Cys101.

This sequence belongs to the PRA-CH family. In terms of assembly, homodimer. The cofactor is Mg(2+). Zn(2+) is required as a cofactor.

The protein resides in the cytoplasm. The catalysed reaction is 1-(5-phospho-beta-D-ribosyl)-5'-AMP + H2O = 1-(5-phospho-beta-D-ribosyl)-5-[(5-phospho-beta-D-ribosylamino)methylideneamino]imidazole-4-carboxamide. Its pathway is amino-acid biosynthesis; L-histidine biosynthesis; L-histidine from 5-phospho-alpha-D-ribose 1-diphosphate: step 3/9. Functionally, catalyzes the hydrolysis of the adenine ring of phosphoribosyl-AMP. The chain is Phosphoribosyl-AMP cyclohydrolase from Nitratidesulfovibrio vulgaris (strain ATCC 29579 / DSM 644 / CCUG 34227 / NCIMB 8303 / VKM B-1760 / Hildenborough) (Desulfovibrio vulgaris).